Reading from the N-terminus, the 207-residue chain is Antitermination protein Q (207 aa).

Residues 1-28 (MRLESVAKFHSPKSPMMSDSPRATASDS) form a disordered region. Cys118, Cys121, Cys144, and Cys147 together coordinate Zn(2+). Residues 118–147 (CRNCHGTGRAVDIAKTEQWGRVVEKECGRC) fold into a zinc finger. The DNA-binding element occupies 171–192 (LTQPTWSRTVKPLYDALVVQCH).

Belongs to the phage antitermination Q type 2 family. In terms of assembly, interacts with host RPOB (via flap domain); this interaction renders host RNAP resistant to transcription pausing and allows it to read through termination signals. Interacts with host RNA polymerase sigma factor RPOD (via domain-4). Interacts with host NusA (via N-terminus and AR2 domain); this interaction releases the autoinhibition of NusA.

Mediates the switch from middle to viral late gene expression by associating with host RNA polymerase (RNAP) so that the latter can read without pausing and through transcription terminators preceding late genes. Competes with host factor sigma 70 for binding to RPOB, the beta-subunit of host RNAP. To join the elongation complex, binds a specific DNA Q-binding element (QBE) and interacts with RNAP that is paused during early elongation. Participates in the lysis-lysogeny decision by activating the expression of the late lytic genes. This chain is Antitermination protein Q (23), found in Salmonella typhimurium.